We begin with the raw amino-acid sequence, 336 residues long: Glyceraldehyde-3-phosphate dehydrogenase (336 aa).

Residues 12-13, Asp-34, and Ser-120 contribute to the NAD(+) site; that span reads RI. D-glyceraldehyde 3-phosphate-binding positions include 150–152, Thr-181, Arg-198, 211–212, and Arg-234; these read SCT and TG. Residue Cys-151 is the Nucleophile of the active site. Asn-316 is an NAD(+) binding site.

The protein belongs to the glyceraldehyde-3-phosphate dehydrogenase family. As to quaternary structure, homotetramer.

The protein localises to the cytoplasm. It carries out the reaction D-glyceraldehyde 3-phosphate + phosphate + NAD(+) = (2R)-3-phospho-glyceroyl phosphate + NADH + H(+). It functions in the pathway carbohydrate degradation; glycolysis; pyruvate from D-glyceraldehyde 3-phosphate: step 1/5. Functionally, catalyzes the oxidative phosphorylation of glyceraldehyde 3-phosphate (G3P) to 1,3-bisphosphoglycerate (BPG) using the cofactor NAD. The first reaction step involves the formation of a hemiacetal intermediate between G3P and a cysteine residue, and this hemiacetal intermediate is then oxidized to a thioester, with concomitant reduction of NAD to NADH. The reduced NADH is then exchanged with the second NAD, and the thioester is attacked by a nucleophilic inorganic phosphate to produce BPG. The polypeptide is Glyceraldehyde-3-phosphate dehydrogenase (gapA) (Staphylococcus aureus).